A 444-amino-acid chain; its full sequence is ATP-dependent protease ATPase subunit HslU (444 aa).

ATP contacts are provided by residues isoleucine 18, 60 to 65, aspartate 256, glutamate 322, and arginine 394; that span reads GVGKTE.

It belongs to the ClpX chaperone family. HslU subfamily. A double ring-shaped homohexamer of HslV is capped on each side by a ring-shaped HslU homohexamer. The assembly of the HslU/HslV complex is dependent on binding of ATP.

The protein resides in the cytoplasm. In terms of biological role, ATPase subunit of a proteasome-like degradation complex; this subunit has chaperone activity. The binding of ATP and its subsequent hydrolysis by HslU are essential for unfolding of protein substrates subsequently hydrolyzed by HslV. HslU recognizes the N-terminal part of its protein substrates and unfolds these before they are guided to HslV for hydrolysis. The chain is ATP-dependent protease ATPase subunit HslU from Klebsiella pneumoniae (strain 342).